A 219-amino-acid polypeptide reads, in one-letter code: Ribose-5-phosphate isomerase A (219 aa).

Substrate contacts are provided by residues 28 to 31 (SGST), 81 to 84 (DGAD), and 94 to 97 (KGGG). The Proton acceptor role is filled by E103. K121 is a substrate binding site.

It belongs to the ribose 5-phosphate isomerase family. Homodimer.

It carries out the reaction aldehydo-D-ribose 5-phosphate = D-ribulose 5-phosphate. It functions in the pathway carbohydrate degradation; pentose phosphate pathway; D-ribose 5-phosphate from D-ribulose 5-phosphate (non-oxidative stage): step 1/1. Functionally, catalyzes the reversible conversion of ribose-5-phosphate to ribulose 5-phosphate. The polypeptide is Ribose-5-phosphate isomerase A (Haemophilus influenzae (strain PittGG)).